Consider the following 463-residue polypeptide: MKLHTRTLLAPSTRFFSSTSIHRALNRPHRPHSPTHAQSKPQHESRFQPRTGSNLSPRQTRFGNNNERYGSASGKQLGQNDRYRGDFAPKRYNNHNNNSNNNNNGGYPSSNVNSRNAAPPNQKLNINHFANDKFAKDGYYTRRDLYELQEILESSTESTRDAIRSLLNQLVDIAPDRFVNLVTDQGLKETDIKFVIKNLDLKKEGISIHSSSRKADSKTEDGADKGASTKPQLPIVRIRPIRDMIQAYSEEKAKLKELELISMGSKKALRQMDKKLKTAQKQSSEKSIQFTWGISMNDLKNQKFNELKNRLLGSKGSNKVNLYLIHDQRRADWSVYDIYKKDQLGEQVKLELKRRQLVKKTVEEMLNNEELGWTWTSEGDVETKLVYSITKKPTTGGTNSTSTIKQTDKNRDGTIRDKKKEKLGSAVSASISLQQAEPKPPAKEKKKLTDEDLDALYSFKIDD.

A mitochondrion-targeting transit peptide spans Met1–Tyr69. Disordered stretches follow at residues Leu25–Leu124, Ile208–Thr229, and Lys391–Thr449. Over residues Gln48 to Gln79 the composition is skewed to polar residues. Residues Asn94 to Ser114 are compositionally biased toward low complexity. The segment covering Arg213–Asp224 has biased composition (basic and acidic residues). The segment covering Lys391–Lys405 has biased composition (polar residues). Basic and acidic residues-rich tracts occupy residues Gln406 to Leu423 and Pro440 to Thr449.

Belongs to the AIM23 family.

The protein resides in the mitochondrion. This Lodderomyces elongisporus (strain ATCC 11503 / CBS 2605 / JCM 1781 / NBRC 1676 / NRRL YB-4239) (Yeast) protein is Altered inheritance of mitochondria protein 23, mitochondrial (AIM23).